The following is a 368-amino-acid chain: Ribulose bisphosphate carboxylase-like protein 1 (368 aa).

It belongs to the RuBisCO large chain family. Type IV subfamily.

Functionally, unknown. Probably does not have RuBisCO activity. This Rhodopseudomonas palustris (strain ATCC BAA-98 / CGA009) protein is Ribulose bisphosphate carboxylase-like protein 1 (rlp1).